The primary structure comprises 72 residues: MAKEEMLEFPGVVKELLPNATFRVELENGHEIIAHTAGKMRKNRIRVLAGDKVQVEMTPYDLTKGRINYRFK.

In terms of domain architecture, S1-like spans 1–72 (MAKEEMLEFP…TKGRINYRFK (72 aa)).

This sequence belongs to the IF-1 family. As to quaternary structure, component of the 30S ribosomal translation pre-initiation complex which assembles on the 30S ribosome in the order IF-2 and IF-3, IF-1 and N-formylmethionyl-tRNA(fMet); mRNA recruitment can occur at any time during PIC assembly.

It localises to the cytoplasm. In terms of biological role, one of the essential components for the initiation of protein synthesis. Stabilizes the binding of IF-2 and IF-3 on the 30S subunit to which N-formylmethionyl-tRNA(fMet) subsequently binds. Helps modulate mRNA selection, yielding the 30S pre-initiation complex (PIC). Upon addition of the 50S ribosomal subunit IF-1, IF-2 and IF-3 are released leaving the mature 70S translation initiation complex. The chain is Translation initiation factor IF-1 from Jannaschia sp. (strain CCS1).